A 311-amino-acid chain; its full sequence is Small ribosomal subunit biogenesis GTPase RsgA (311 aa).

One can recognise a CP-type G domain in the interval 88 to 246; it reads SKEKEQVIVA…VIDTPGIREF (159 aa). Residues 137–140 and 188–196 each bind GTP; these read NKID and GHSGVGKST. Residues cysteine 270, cysteine 275, histidine 277, and cysteine 283 each contribute to the Zn(2+) site.

This sequence belongs to the TRAFAC class YlqF/YawG GTPase family. RsgA subfamily. Monomer. Associates with 30S ribosomal subunit, binds 16S rRNA. Zn(2+) is required as a cofactor.

Its subcellular location is the cytoplasm. One of several proteins that assist in the late maturation steps of the functional core of the 30S ribosomal subunit. Helps release RbfA from mature subunits. May play a role in the assembly of ribosomal proteins into the subunit. Circularly permuted GTPase that catalyzes slow GTP hydrolysis, GTPase activity is stimulated by the 30S ribosomal subunit. The chain is Small ribosomal subunit biogenesis GTPase RsgA from Chlorobaculum tepidum (strain ATCC 49652 / DSM 12025 / NBRC 103806 / TLS) (Chlorobium tepidum).